Reading from the N-terminus, the 183-residue chain is Orotate phosphoribosyltransferase (183 aa).

Residues Arg21, Lys88, and 112–120 (EDVVTTGES) contribute to the 5-phospho-alpha-D-ribose 1-diphosphate site. Residues Thr116 and Arg144 each contribute to the orotate site.

The protein belongs to the purine/pyrimidine phosphoribosyltransferase family. PyrE subfamily. Homodimer. It depends on Mg(2+) as a cofactor.

It carries out the reaction orotidine 5'-phosphate + diphosphate = orotate + 5-phospho-alpha-D-ribose 1-diphosphate. The protein operates within pyrimidine metabolism; UMP biosynthesis via de novo pathway; UMP from orotate: step 1/2. In terms of biological role, catalyzes the transfer of a ribosyl phosphate group from 5-phosphoribose 1-diphosphate to orotate, leading to the formation of orotidine monophosphate (OMP). The polypeptide is Orotate phosphoribosyltransferase (Thermus thermophilus (strain ATCC 27634 / DSM 579 / HB8)).